A 642-amino-acid polypeptide reads, in one-letter code: Arginine--tRNA ligase (642 aa).

Positions 133–143 (VNPTKPLHMGH) match the 'HIGH' region motif.

Belongs to the class-I aminoacyl-tRNA synthetase family.

The protein localises to the cytoplasm. It catalyses the reaction tRNA(Arg) + L-arginine + ATP = L-arginyl-tRNA(Arg) + AMP + diphosphate. This is Arginine--tRNA ligase from Thermococcus kodakarensis (strain ATCC BAA-918 / JCM 12380 / KOD1) (Pyrococcus kodakaraensis (strain KOD1)).